The primary structure comprises 89 residues: Small ribosomal subunit protein uS15 (89 aa).

Belongs to the universal ribosomal protein uS15 family. In terms of assembly, part of the 30S ribosomal subunit. Forms a bridge to the 50S subunit in the 70S ribosome, contacting the 23S rRNA.

One of the primary rRNA binding proteins, it binds directly to 16S rRNA where it helps nucleate assembly of the platform of the 30S subunit by binding and bridging several RNA helices of the 16S rRNA. Functionally, forms an intersubunit bridge (bridge B4) with the 23S rRNA of the 50S subunit in the ribosome. This is Small ribosomal subunit protein uS15 from Photorhabdus luminescens (Xenorhabdus luminescens).